The following is a 660-amino-acid chain: tRNA 5-methylaminomethyl-2-thiouridine biosynthesis bifunctional protein MnmC (660 aa).

The tract at residues 1–242 is tRNA (mnm(5)s(2)U34)-methyltransferase; the sequence is MTDRIVPATL…KRAMLVGEFA (242 aa). The FAD-dependent cmnm(5)s(2)U34 oxidoreductase stretch occupies residues 266-660; it reads IGAGLAGCAV…VRALRHGRVA (395 aa).

It in the N-terminal section; belongs to the methyltransferase superfamily. tRNA (mnm(5)s(2)U34)-methyltransferase family. The protein in the C-terminal section; belongs to the DAO family. The cofactor is FAD.

Its subcellular location is the cytoplasm. It carries out the reaction 5-aminomethyl-2-thiouridine(34) in tRNA + S-adenosyl-L-methionine = 5-methylaminomethyl-2-thiouridine(34) in tRNA + S-adenosyl-L-homocysteine + H(+). In terms of biological role, catalyzes the last two steps in the biosynthesis of 5-methylaminomethyl-2-thiouridine (mnm(5)s(2)U) at the wobble position (U34) in tRNA. Catalyzes the FAD-dependent demodification of cmnm(5)s(2)U34 to nm(5)s(2)U34, followed by the transfer of a methyl group from S-adenosyl-L-methionine to nm(5)s(2)U34, to form mnm(5)s(2)U34. The chain is tRNA 5-methylaminomethyl-2-thiouridine biosynthesis bifunctional protein MnmC from Burkholderia pseudomallei (strain K96243).